We begin with the raw amino-acid sequence, 446 residues long: Methylenetetrahydrofolate--tRNA-(uracil-5-)-methyltransferase TrmFO (446 aa).

11-16 (GGGLAG) is an FAD binding site.

Belongs to the MnmG family. TrmFO subfamily. Requires FAD as cofactor.

It localises to the cytoplasm. It catalyses the reaction uridine(54) in tRNA + (6R)-5,10-methylene-5,6,7,8-tetrahydrofolate + NADH + H(+) = 5-methyluridine(54) in tRNA + (6S)-5,6,7,8-tetrahydrofolate + NAD(+). It carries out the reaction uridine(54) in tRNA + (6R)-5,10-methylene-5,6,7,8-tetrahydrofolate + NADPH + H(+) = 5-methyluridine(54) in tRNA + (6S)-5,6,7,8-tetrahydrofolate + NADP(+). Functionally, catalyzes the folate-dependent formation of 5-methyl-uridine at position 54 (M-5-U54) in all tRNAs. In Oleidesulfovibrio alaskensis (strain ATCC BAA-1058 / DSM 17464 / G20) (Desulfovibrio alaskensis), this protein is Methylenetetrahydrofolate--tRNA-(uracil-5-)-methyltransferase TrmFO.